The following is a 730-amino-acid chain: Elongation factor 2 (730 aa).

The region spanning 19–228 (QRIRNIGIVA…TGVSFKDVYD (210 aa)) is the tr-type G domain. GTP is bound by residues 28–35 (AHIDHGKT), 94–98 (DTPGH), and 148–151 (NKVD). Position 596 is a diphthamide (histidine 596).

This sequence belongs to the TRAFAC class translation factor GTPase superfamily. Classic translation factor GTPase family. EF-G/EF-2 subfamily.

It is found in the cytoplasm. Functionally, catalyzes the GTP-dependent ribosomal translocation step during translation elongation. During this step, the ribosome changes from the pre-translocational (PRE) to the post-translocational (POST) state as the newly formed A-site-bound peptidyl-tRNA and P-site-bound deacylated tRNA move to the P and E sites, respectively. Catalyzes the coordinated movement of the two tRNA molecules, the mRNA and conformational changes in the ribosome. The polypeptide is Elongation factor 2 (Methanosarcina acetivorans (strain ATCC 35395 / DSM 2834 / JCM 12185 / C2A)).